The following is a 332-amino-acid chain: Phosphate acyltransferase (332 aa).

It belongs to the PlsX family. As to quaternary structure, homodimer. Probably interacts with PlsY.

It localises to the cytoplasm. The enzyme catalyses a fatty acyl-[ACP] + phosphate = an acyl phosphate + holo-[ACP]. Its pathway is lipid metabolism; phospholipid metabolism. In terms of biological role, catalyzes the reversible formation of acyl-phosphate (acyl-PO(4)) from acyl-[acyl-carrier-protein] (acyl-ACP). This enzyme utilizes acyl-ACP as fatty acyl donor, but not acyl-CoA. This is Phosphate acyltransferase from Caldanaerobacter subterraneus subsp. tengcongensis (strain DSM 15242 / JCM 11007 / NBRC 100824 / MB4) (Thermoanaerobacter tengcongensis).